The chain runs to 100 residues: MNQERLMQVLLAPQISEKATYVADKYEQVIFRVASDATKPEIKAAVELLFKVEVEGVQVANVKGKVKRFKGATGRRKGWKKAYVSLKPGQEINFVEGGNA.

It belongs to the universal ribosomal protein uL23 family. In terms of assembly, part of the 50S ribosomal subunit. Contacts protein L29, and trigger factor when it is bound to the ribosome.

One of the early assembly proteins it binds 23S rRNA. One of the proteins that surrounds the polypeptide exit tunnel on the outside of the ribosome. Forms the main docking site for trigger factor binding to the ribosome. In Dechloromonas aromatica (strain RCB), this protein is Large ribosomal subunit protein uL23.